Reading from the N-terminus, the 539-residue chain is MRPPVRASLGLLVAWAIGACVCAAAIETTWKHASAGDEVRLFALPAARPGAPPAKVVWELDPMAACGSLRPSWVSLRPPGQVLDTVVDAECVSEPVLLAAWYERRDGGSEVPAPFWGPDGAPPQRGNVTNGTLVLREARVGDSGMHVLSVFHPPNATAARHVVFLKVAPRRPEPAGGTPPPRDDEEGGTEEPATPAPPPHPHPIAEVAHVRGVTVSLRTQTAILFAPGDTVHTDVSVMPIAHDDDPYVMEVVWVRFDVPEECGEMRIYEPCLYHPQLPECRSPADAPCAASVWTERLAVRRYGPCSRGVPPPRCPSDAAMESRAGLGWYGHTVNLQLRDASEASGGLYVCVVYVNGHVHAWGHVVISTASRYRNAVVERSPPRYRPPPVEPTPSAQPTGPRPAAPRAARLVGVLGAAVGLAVAGLSVWACVTCRRARAWRAVKRRDLMAPTYIRLADDELYGDLSSYGDSDDSEYDSDSDRLPGTDPAPKRGSGFQILSGAKADPWSAGARQHGHLITFRADDTSRYRDPSSPDPPHRR.

The signal sequence occupies residues 1–24; sequence MRPPVRASLGLLVAWAIGACVCAA. At 25–410 the chain is on the virion surface side; the sequence is AIETTWKHAS…RPAAPRAARL (386 aa). Residues 66–91 are interaction with gI; that stretch reads CGSLRPSWVSLRPPGQVLDTVVDAEC. The disordered stretch occupies residues 168–203; sequence APRRPEPAGGTPPPRDDEEGGTEEPATPAPPPHPHP. Disulfide bonds link cysteine 262-cysteine 288, cysteine 271-cysteine 280, and cysteine 305-cysteine 314. The tract at residues 378 to 404 is disordered; it reads ERSPPRYRPPPVEPTPSAQPTGPRPAA. A helical membrane pass occupies residues 411–431; sequence VGVLGAAVGLAVAGLSVWACV. At 432-539 the chain is on the intravirion side; sequence TCRRARAWRA…PSSPDPPHRR (108 aa). The Internalization motif signature appears at 452 to 455; sequence YIRL. 2 disordered regions span residues 466–497 and 517–539; these read SYGD…GFQI and ITFR…PHRR. The interval 468 to 480 is acidic; that stretch reads GDSDDSEYDSDSD. Basic and acidic residues predominate over residues 520-531; it reads RADDTSRYRDPS.

Belongs to the alphaherpesvirinae glycoprotein E family. As to quaternary structure, interacts with gI. Post-translationally, phosphorylated on serines within the acidic cluster. Phosphorylation determines whether endocytosed viral gE traffics to the trans-Golgi network or recycles to the cell membrane.

It is found in the virion membrane. The protein resides in the host cell membrane. Its subcellular location is the host cell junction. It localises to the host Golgi apparatus membrane. The protein localises to the host endosome membrane. Functionally, in epithelial cells, the heterodimer gE/gI is required for the cell-to-cell spread of the virus, by sorting nascent virions to cell junctions. Once the virus reaches the cell junctions, virus particles can spread to adjacent cells extremely rapidly through interactions with cellular receptors that accumulate at these junctions. Implicated in basolateral spread in polarized cells. In neuronal cells, gE/gI is essential for the anterograde spread of the infection throughout the host nervous system. Together with US9, the heterodimer gE/gI is involved in the sorting and transport of viral structural components toward axon tips. The sequence is that of Envelope glycoprotein E (gE) from Macaca fascicularis (Crab-eating macaque).